A 121-amino-acid chain; its full sequence is Large ribosomal subunit protein uL14 (121 aa).

It belongs to the universal ribosomal protein uL14 family. As to quaternary structure, part of the 50S ribosomal subunit. Forms a cluster with proteins L3 and L19. In the 70S ribosome, L14 and L19 interact and together make contacts with the 16S rRNA in bridges B5 and B8.

Functionally, binds to 23S rRNA. Forms part of two intersubunit bridges in the 70S ribosome. The protein is Large ribosomal subunit protein uL14 of Parabacteroides distasonis (strain ATCC 8503 / DSM 20701 / CIP 104284 / JCM 5825 / NCTC 11152).